The following is a 412-amino-acid chain: Serine hydroxymethyltransferase (412 aa).

(6S)-5,6,7,8-tetrahydrofolate is bound by residues L117 and 121–123 (GHL). N6-(pyridoxal phosphate)lysine is present on K226. Position 349-351 (349-351 (SPF)) interacts with (6S)-5,6,7,8-tetrahydrofolate.

Belongs to the SHMT family. As to quaternary structure, homodimer. Pyridoxal 5'-phosphate serves as cofactor.

The protein resides in the cytoplasm. The enzyme catalyses (6R)-5,10-methylene-5,6,7,8-tetrahydrofolate + glycine + H2O = (6S)-5,6,7,8-tetrahydrofolate + L-serine. It participates in one-carbon metabolism; tetrahydrofolate interconversion. It functions in the pathway amino-acid biosynthesis; glycine biosynthesis; glycine from L-serine: step 1/1. Catalyzes the reversible interconversion of serine and glycine with tetrahydrofolate (THF) serving as the one-carbon carrier. This reaction serves as the major source of one-carbon groups required for the biosynthesis of purines, thymidylate, methionine, and other important biomolecules. Also exhibits THF-independent aldolase activity toward beta-hydroxyamino acids, producing glycine and aldehydes, via a retro-aldol mechanism. The polypeptide is Serine hydroxymethyltransferase (Nitratidesulfovibrio vulgaris (strain DSM 19637 / Miyazaki F) (Desulfovibrio vulgaris)).